A 742-amino-acid chain; its full sequence is Alcohol dehydrogenase (quinone), dehydrogenase subunit (742 aa).

Positions Met1 to Ala35 are cleaved as a signal peptide. Glu96 lines the pyrroloquinoline quinone pocket. Cys142 and Cys143 are joined by a disulfide. Arg148 contributes to the pyrroloquinoline quinone binding site. Glu216 serves as a coordination point for Ca(2+). Thr278 is a binding site for pyrroloquinoline quinone. The Ca(2+) site is built by Asn298 and Asp343. Asp343 (proton acceptor) is an active-site residue. Pyrroloquinoline quinone-binding residues include Lys370 and Ile584. One can recognise a Cytochrome c domain in the interval Lys636–Ala715. Residues Cys649, Cys652, His653, and Met692 each coordinate heme c. Basic and acidic residues predominate over residues Glu722 to Ile732. The interval Glu722–Pro742 is disordered.

The protein belongs to the bacterial PQQ dehydrogenase family. As to quaternary structure, the alcohol dehydrogenase multicomponent enzyme system is composed of a dehydrogenase subunit I (AdhA) and a cytochrome c subunit II (AdhB). Pyrroloquinoline quinone is required as a cofactor. Requires Ca(2+) as cofactor. It depends on heme c as a cofactor.

It is found in the cell membrane. It carries out the reaction ethanol + a ubiquinone = a ubiquinol + acetaldehyde. In terms of biological role, dehydrogenase component of the alcohol dehydrogenase multicomponent enzyme system which is involved in the production of acetic acid and in the ethanol oxidase respiratory chain. Quinohemoprotein alcohol dehydrogenase (ADH) catalyzes the oxidation of ethanol to acetaldehyde by transferring electrons to the ubiquinone embedded in the membrane phospholipids. The electrons transfer from ethanol to membranous ubiquinone occurs from pyrroloquinoline quinone (PQQ) to one heme c in subunit I (AdhA), and finally to two heme c in subunit II (AdhB). Besides ubiquinone reduction, ADH also has a ubiquinol (QH2) oxidation reaction which mediates electron transfer from ubiquinol to the non-energy generating bypass oxidase system. The electrons transfer occurs from ubiquinol (QH2) to the additional heme c within subunit II (AdhB). The chain is Alcohol dehydrogenase (quinone), dehydrogenase subunit from Acetobacter aceti.